Reading from the N-terminus, the 198-residue chain is Large ribosomal subunit protein bL25 (198 aa).

Belongs to the bacterial ribosomal protein bL25 family. CTC subfamily. Part of the 50S ribosomal subunit; part of the 5S rRNA/L5/L18/L25 subcomplex. Contacts the 5S rRNA. Binds to the 5S rRNA independently of L5 and L18.

In terms of biological role, this is one of the proteins that binds to the 5S RNA in the ribosome where it forms part of the central protuberance. The protein is Large ribosomal subunit protein bL25 of Phocaeicola vulgatus (strain ATCC 8482 / DSM 1447 / JCM 5826 / CCUG 4940 / NBRC 14291 / NCTC 11154) (Bacteroides vulgatus).